Reading from the N-terminus, the 593-residue chain is Lipolysis-stimulated lipoprotein receptor (593 aa).

The N-terminal stretch at 1–35 (MAPAAGACAGAPDSHPATVVFVCLFLIIFCPDPAS) is a signal peptide. Over 36 to 206 (AIQVTVSDPY…PGFRAGPLED (171 aa)) the chain is Extracellular. Residues 89-181 (PASVDNQLNA…DLDGNNEAYA (93 aa)) form the Ig-like V-type domain. A disulfide bond links Cys-113 and Cys-165. The chain crosses the membrane as a helical span at residues 207–227 (WLFVVVVCLASLLLFLLLGIC). Over 228 to 593 (WCQCCPHTCC…LALSRESLVV (366 aa)) the chain is Cytoplasmic. At Thr-283 the chain carries Phosphothreonine. Phosphoserine occurs at positions 308, 314, 332, 375, and 379. A compositionally biased stretch (basic and acidic residues) spans 375 to 387 (SEVTSLHEDDWRS). The tract at residues 375 to 578 (SEVTSLHEDD…ETDSQASRER (204 aa)) is disordered. Phosphothreonine is present on Thr-396. Ser-407, Ser-410, and Ser-436 each carry phosphoserine. A compositionally biased stretch (basic and acidic residues) spans 435 to 444 (RSVDALDDIN). Residues 445 to 460 (RPGSTESGRSSPPSSG) show a composition bias toward low complexity. Ser-471 and Ser-473 each carry phosphoserine. The segment covering 472–550 (RSRDDLYDPD…GSGERRRVYR (79 aa)) has biased composition (basic and acidic residues). Tyr-478 carries the phosphotyrosine modification. Position 575 is a phosphoserine (Ser-575). A Glycyl lysine isopeptide (Lys-Gly) (interchain with G-Cter in ubiquitin) cross-link involves residue Lys-582. Residues Ser-587 and Ser-590 each carry the phosphoserine modification.

Belongs to the immunoglobulin superfamily. LISCH7 family. In terms of assembly, homotrimer or homotetramer constituted of isoform 1 and/or isoform 2 and isoform 3. Assembles into cell-cell contacts. Interacts (via the cytoplasmic domain) with MARVELD2 (via C-terminal cytoplasmic domain); the interaction is required to recruit MARVELD2 to tricellular contacts. Interacts with OCLN. In terms of processing, phosphorylation at Ser-308 by MAPK8/JNK1 and MAPK9/JNK2 may be required for exclusive localization at tricellular tight junstions. Polyubiquitinated at Lys-582 via 'Lys-63'-linked ubiquitin chains; deubiquitinated by USP53. In terms of tissue distribution, specifically expressed in liver. Also detected in kidney and lung.

It localises to the cell membrane. It is found in the cell junction. The protein localises to the tight junction. In terms of biological role, probable role in the clearance of triglyceride-rich lipoprotein from blood. Binds chylomicrons, LDL and VLDL in presence of free fatty acids and allows their subsequent uptake in the cells. Maintains epithelial barrier function by recruiting MARVELD2/tricellulin to tricellular tight junctions. The polypeptide is Lipolysis-stimulated lipoprotein receptor (Rattus norvegicus (Rat)).